The primary structure comprises 194 residues: Protein PHLOEM PROTEIN 2-LIKE A2 (194 aa).

Residues 49-71 (VTFVFFCFFKISLNSAYLYTLYS) traverse the membrane as a helical segment.

Vascular tissues, specifically in phloem companion cell-sieve element complexes.

Its subcellular location is the membrane. The protein is Protein PHLOEM PROTEIN 2-LIKE A2 (PP2A2) of Arabidopsis thaliana (Mouse-ear cress).